Reading from the N-terminus, the 276-residue chain is Probable NADH-ubiquinone oxidoreductase 30.4 kDa subunit, mitochondrial (276 aa).

Residues 248 to 276 form a disordered region; sequence EPVGEGKDFTPESFKLPTPQPEPEQEEKK.

This sequence belongs to the complex I 30 kDa subunit family. As to quaternary structure, complex I is composed of about 30 different subunits. This is a component of the iron-sulfur protein fraction.

Its subcellular location is the mitochondrion inner membrane. It carries out the reaction a ubiquinone + NADH + 5 H(+)(in) = a ubiquinol + NAD(+) + 4 H(+)(out). Functionally, core subunit of the mitochondrial membrane respiratory chain NADH dehydrogenase (Complex I) that is believed to belong to the minimal assembly required for catalysis. Complex I functions in the transfer of electrons from NADH to the respiratory chain. The immediate electron acceptor for the enzyme is believed to be ubiquinone. Essential for N-alkane assimilation. This chain is Probable NADH-ubiquinone oxidoreductase 30.4 kDa subunit, mitochondrial (ALI1), found in Candida maltosa (Yeast).